We begin with the raw amino-acid sequence, 1123 residues long: Ubiquitin carboxyl-terminal hydrolase 36 (1123 aa).

Basic and acidic residues-rich tracts occupy residues 1-19 (MPIV…KDSA) and 69-90 (GASR…EHTY). Disordered stretches follow at residues 1–22 (MPIV…ADDG) and 67–95 (TEGA…SCGD). Residues 122–423 (AGLHNLGNTC…QAYVLFYLRI (302 aa)) form the USP domain. Cys-131 serves as the catalytic Nucleophile. Residue His-382 is the Proton acceptor of the active site. Ser-429 and Ser-464 each carry phosphoserine. Positions 430–577 (PEGLISRTGS…RQGSWDSRDV (148 aa)) are disordered. Polar residues predominate over residues 491 to 503 (RNGSTLGLKSQNG). Over residues 510–519 (PSGSPSPKLS) the composition is skewed to low complexity. The residue at position 546 (Ser-546) is a Phosphoserine. The segment covering 557 to 571 (SNSNSSRSGSQRQGS) has biased composition (low complexity). Ser-582 is modified (phosphoserine). Residues 589 to 999 (ATANGHGLKG…ESSSCAPSAN (411 aa)) are disordered. Residues 597–609 (KGNDESAGLDRRG) show a composition bias toward basic and acidic residues. Residues 610–623 (SSSSSPEHSASSDS) are compositionally biased toward low complexity. Residues 640 to 654 (SQETNCSTAGHSKTP) show a composition bias toward polar residues. Ser-667 carries the post-translational modification Phosphoserine. Positions 669–681 (VLSNTTTEPASTM) are enriched in polar residues. Ser-682 carries the post-translational modification Phosphoserine. Over residues 687-697 (KKLALSAKKAS) the composition is skewed to low complexity. Phosphoserine occurs at positions 713 and 742. Positions 773-785 (EPRSCSSISTALP) are enriched in polar residues. Positions 841 to 850 (HGKRKRKKKK) are enriched in basic residues. Polar residues predominate over residues 891 to 902 (GTQPQVNGQQVG). Ser-952 is subject to Phosphoserine. Positions 963 to 975 (QETQRAVEEDGHL) are enriched in basic and acidic residues.

The protein belongs to the peptidase C19 family. In terms of assembly, interacts with isoform 3 of FBXW7; the interaction inhibits MYC degradation induced by SCF(FBW7) complex. Interacts with NTRK1; USP36 does not deubiquitinate NTRK1. Interacts with NEDD4L (via domains WW1, 3 and 4); the interaction inhibits ubiquitination of, at least, NTRK1, KCNQ2 and KCNQ3 by NEDD4L. Interacts (via C-terminus) with EXOSC10 (via C-terminus); the interaction is facilitated by the association with RNA and promotes sumoylation of EXOSC10. Polyubiquitinated by NEDD4L, no effect on USP36 protein levels. Both proteins interact with and regulate each other's ubiquitination levels. As to expression, broadly expressed.

The protein localises to the nucleus. The protein resides in the nucleolus. It is found in the cytoplasm. It carries out the reaction Thiol-dependent hydrolysis of ester, thioester, amide, peptide and isopeptide bonds formed by the C-terminal Gly of ubiquitin (a 76-residue protein attached to proteins as an intracellular targeting signal).. In terms of biological role, deubiquitinase essential for the regulation of nucleolar structure and function. Required for cell and organism viability. Plays an important role in ribosomal RNA processing and protein synthesis, which is mediated, at least in part, through deubiquitination of DHX33, NPM1 and FBL, regulating their protein stability. Functions as a transcriptional repressor by deubiquiting histone H2B at the promoters of genes critical for cellular differentiation, such as CDKN1A, thereby preventing histone H3 'Lys-4' trimethylation (H3K4). Specifically deubiquitinates MYC in the nucleolus, leading to prevent MYC degradation by the proteasome: acts by specifically interacting with isoform 3 of FBXW7 (FBW7gamma) in the nucleolus and counteracting ubiquitination of MYC by the SCF(FBW7) complex. In contrast, it does not interact with isoform 1 of FBXW7 (FBW7alpha) in the nucleoplasm. Interacts to and regulates the actions of E3 ubiquitin-protein ligase NEDD4L over substrates such as NTRK1, KCNQ2 and KCNQ3, affecting their expression an functions. Deubiquitinates SOD2, regulates SOD2 protein stability. Deubiquitinase activity is required to control selective autophagy activation by ubiquitinated proteins. Promotes CEP63 stabilization through 'Lys-48'-linked deubiquitination leading to increased stability. Acts as a SUMO ligase to promote EXOSC10 sumoylation critical for the nucleolar RNA exosome function in rRNA processing. Binds to pre-rRNAs. This Homo sapiens (Human) protein is Ubiquitin carboxyl-terminal hydrolase 36.